A 485-amino-acid chain; its full sequence is Glutamyl-tRNA(Gln) amidotransferase subunit A (485 aa).

Residues Lys-78 and Ser-153 each act as charge relay system in the active site. The active-site Acyl-ester intermediate is Ser-177.

The protein belongs to the amidase family. GatA subfamily. In terms of assembly, heterotrimer of A, B and C subunits.

It catalyses the reaction L-glutamyl-tRNA(Gln) + L-glutamine + ATP + H2O = L-glutaminyl-tRNA(Gln) + L-glutamate + ADP + phosphate + H(+). Functionally, allows the formation of correctly charged Gln-tRNA(Gln) through the transamidation of misacylated Glu-tRNA(Gln) in organisms which lack glutaminyl-tRNA synthetase. The reaction takes place in the presence of glutamine and ATP through an activated gamma-phospho-Glu-tRNA(Gln). In Geobacter sp. (strain M21), this protein is Glutamyl-tRNA(Gln) amidotransferase subunit A.